We begin with the raw amino-acid sequence, 328 residues long: Aspartate carbamoyltransferase catalytic subunit (328 aa).

Positions 64 and 65 each coordinate carbamoyl phosphate. Lys92 serves as a coordination point for L-aspartate. Positions 114, 144, and 147 each coordinate carbamoyl phosphate. Residues Arg177 and Arg232 each coordinate L-aspartate. Carbamoyl phosphate is bound by residues Gly273 and Pro274.

It belongs to the aspartate/ornithine carbamoyltransferase superfamily. ATCase family. As to quaternary structure, heterododecamer (2C3:3R2) of six catalytic PyrB chains organized as two trimers (C3), and six regulatory PyrI chains organized as three dimers (R2).

It carries out the reaction carbamoyl phosphate + L-aspartate = N-carbamoyl-L-aspartate + phosphate + H(+). The protein operates within pyrimidine metabolism; UMP biosynthesis via de novo pathway; (S)-dihydroorotate from bicarbonate: step 2/3. Functionally, catalyzes the condensation of carbamoyl phosphate and aspartate to form carbamoyl aspartate and inorganic phosphate, the committed step in the de novo pyrimidine nucleotide biosynthesis pathway. The protein is Aspartate carbamoyltransferase catalytic subunit of Halorhodospira halophila (strain DSM 244 / SL1) (Ectothiorhodospira halophila (strain DSM 244 / SL1)).